A 251-amino-acid chain; its full sequence is Segregation and condensation protein A (251 aa).

This sequence belongs to the ScpA family. Component of a cohesin-like complex composed of ScpA, ScpB and the Smc homodimer, in which ScpA and ScpB bind to the head domain of Smc. The presence of the three proteins is required for the association of the complex with DNA.

It is found in the cytoplasm. Functionally, participates in chromosomal partition during cell division. May act via the formation of a condensin-like complex containing Smc and ScpB that pull DNA away from mid-cell into both cell halves. The polypeptide is Segregation and condensation protein A (Clostridium botulinum (strain Alaska E43 / Type E3)).